The chain runs to 406 residues: 3-oxoacyl-[acyl-carrier-protein] synthase 1 (406 aa).

In terms of domain architecture, Ketosynthase family 3 (KS3) spans 1–403; the sequence is MKRAVITGLG…GTNATLVMRK (403 aa). Catalysis depends on for beta-ketoacyl synthase activity residues C163, H298, and H333.

This sequence belongs to the thiolase-like superfamily. Beta-ketoacyl-ACP synthases family. Homodimer.

Its subcellular location is the cytoplasm. The enzyme catalyses a fatty acyl-[ACP] + malonyl-[ACP] + H(+) = a 3-oxoacyl-[ACP] + holo-[ACP] + CO2. The catalysed reaction is (3Z)-decenoyl-[ACP] + malonyl-[ACP] + H(+) = 3-oxo-(5Z)-dodecenoyl-[ACP] + holo-[ACP] + CO2. The protein operates within lipid metabolism; fatty acid biosynthesis. In terms of biological role, involved in the type II fatty acid elongation cycle. Catalyzes the elongation of a wide range of acyl-ACP by the addition of two carbons from malonyl-ACP to an acyl acceptor. Can also use unsaturated fatty acids. Catalyzes a key reaction in unsaturated fatty acid (UFA) synthesis, the elongation of the cis-3-decenoyl-ACP produced by FabA. This chain is 3-oxoacyl-[acyl-carrier-protein] synthase 1 (fabB), found in Escherichia coli O6:H1 (strain CFT073 / ATCC 700928 / UPEC).